The primary structure comprises 212 residues: Ras-related protein Rab-15 (212 aa).

GTP-binding residues include S17, G18, V19, G20, K21, T22, C23, S35, S39, and T40. Residue T22 coordinates Mg(2+). 2 consecutive short sequence motifs (switch) follow at residues 31-45 (NEFHSSHISTIGVDF) and 63-80 (DTAGQERYQTITKQYYRR). 2 residues coordinate Mg(2+): T40 and D63. GTP contacts are provided by G66, N121, K122, D124, S151, and A152. Residues 192-212 (ELEEDEGKPEGPANSSKTCWC) form a disordered region. 2 S-geranylgeranyl cysteine lipidation sites follow: C210 and C212. C212 carries the cysteine methyl ester modification.

The protein belongs to the small GTPase superfamily. Rab family. As to quaternary structure, the GTP bound form of RAB15 interacts with REP15. Interacts (GTP-bound form) with MICAL1, MICAL3, MICALCL, EHBP1 and EHBP1L1. Requires Mg(2+) as cofactor.

It is found in the cell membrane. It carries out the reaction GTP + H2O = GDP + phosphate + H(+). Its activity is regulated as follows. Regulated by guanine nucleotide exchange factors (GEFs) which promote the exchange of bound GDP for free GTP. Regulated by GTPase activating proteins (GAPs) which increase the GTP hydrolysis activity. Inhibited by GDP dissociation inhibitors (GDIs). The small GTPases Rab are key regulators of intracellular membrane trafficking, from the formation of transport vesicles to their fusion with membranes. Rabs cycle between an inactive GDP-bound form and an active GTP-bound form that is able to recruit to membranes different sets of downstream effectors directly responsible for vesicle formation, movement, tethering and fusion. RAB15 may act in concert with RAB3A in regulating aspects of synaptic vesicle membrane flow within the nerve terminal. The polypeptide is Ras-related protein Rab-15 (RAB15) (Bos taurus (Bovine)).